We begin with the raw amino-acid sequence, 334 residues long: Holliday junction branch migration complex subunit RuvB (334 aa).

The segment at 1–182 (MDERLVSSEA…FGVLSRLEYY (182 aa)) is large ATPase domain (RuvB-L). Residues L21, R22, G63, K66, T67, T68, 129-131 (EDF), R172, Y182, and R219 contribute to the ATP site. Residue T67 coordinates Mg(2+). Residues 183–253 (TQEELTDIVS…IAHDALERLQ (71 aa)) are small ATPAse domain (RuvB-S). The interval 256-334 (ALGLDHIDHK…HFRLEAPARD (79 aa)) is head domain (RuvB-H). 2 residues coordinate DNA: R311 and R316.

Belongs to the RuvB family. In terms of assembly, homohexamer. Forms an RuvA(8)-RuvB(12)-Holliday junction (HJ) complex. HJ DNA is sandwiched between 2 RuvA tetramers; dsDNA enters through RuvA and exits via RuvB. An RuvB hexamer assembles on each DNA strand where it exits the tetramer. Each RuvB hexamer is contacted by two RuvA subunits (via domain III) on 2 adjacent RuvB subunits; this complex drives branch migration. In the full resolvosome a probable DNA-RuvA(4)-RuvB(12)-RuvC(2) complex forms which resolves the HJ.

Its subcellular location is the cytoplasm. It carries out the reaction ATP + H2O = ADP + phosphate + H(+). The RuvA-RuvB-RuvC complex processes Holliday junction (HJ) DNA during genetic recombination and DNA repair, while the RuvA-RuvB complex plays an important role in the rescue of blocked DNA replication forks via replication fork reversal (RFR). RuvA specifically binds to HJ cruciform DNA, conferring on it an open structure. The RuvB hexamer acts as an ATP-dependent pump, pulling dsDNA into and through the RuvAB complex. RuvB forms 2 homohexamers on either side of HJ DNA bound by 1 or 2 RuvA tetramers; 4 subunits per hexamer contact DNA at a time. Coordinated motions by a converter formed by DNA-disengaged RuvB subunits stimulates ATP hydrolysis and nucleotide exchange. Immobilization of the converter enables RuvB to convert the ATP-contained energy into a lever motion, pulling 2 nucleotides of DNA out of the RuvA tetramer per ATP hydrolyzed, thus driving DNA branch migration. The RuvB motors rotate together with the DNA substrate, which together with the progressing nucleotide cycle form the mechanistic basis for DNA recombination by continuous HJ branch migration. Branch migration allows RuvC to scan DNA until it finds its consensus sequence, where it cleaves and resolves cruciform DNA. The chain is Holliday junction branch migration complex subunit RuvB from Bacillus velezensis (strain DSM 23117 / BGSC 10A6 / LMG 26770 / FZB42) (Bacillus amyloliquefaciens subsp. plantarum).